Consider the following 238-residue polypeptide: MTKLSVNINKVATLRNARGGNNPDVVKVALDCEAFGAEGITVHPRPDERHIRRSDVYELRPLLTTEFNIEGYPSPEFVDLVLKVKPHQVTLVPDAPDQITSNAGWDTKTNLSFLTELMDTFGQAGIRTSIFVGTDKEMIEYAAKAGADRVELYTEPYATMYPRNPEAAIAPFIEAAKVTRSLGMGLNAGHDLSLVNLKYMHTHIPWLDEVSIGHALISDALYMGLKQTIEEYKNCLRS.

3-amino-2-oxopropyl phosphate is bound by residues Asn-7 and Arg-18. The Proton acceptor role is filled by His-43. Residues Arg-45 and His-50 each contribute to the 1-deoxy-D-xylulose 5-phosphate site. The Proton acceptor role is filled by Glu-70. Residue Thr-100 participates in 1-deoxy-D-xylulose 5-phosphate binding. The Proton donor role is filled by His-190. Residues Asp-191 and 213–214 contribute to the 3-amino-2-oxopropyl phosphate site; that span reads GH.

It belongs to the PNP synthase family. Homooctamer; tetramer of dimers.

The protein localises to the cytoplasm. It carries out the reaction 3-amino-2-oxopropyl phosphate + 1-deoxy-D-xylulose 5-phosphate = pyridoxine 5'-phosphate + phosphate + 2 H2O + H(+). Its pathway is cofactor biosynthesis; pyridoxine 5'-phosphate biosynthesis; pyridoxine 5'-phosphate from D-erythrose 4-phosphate: step 5/5. Its function is as follows. Catalyzes the complicated ring closure reaction between the two acyclic compounds 1-deoxy-D-xylulose-5-phosphate (DXP) and 3-amino-2-oxopropyl phosphate (1-amino-acetone-3-phosphate or AAP) to form pyridoxine 5'-phosphate (PNP) and inorganic phosphate. This is Pyridoxine 5'-phosphate synthase from Phocaeicola vulgatus (strain ATCC 8482 / DSM 1447 / JCM 5826 / CCUG 4940 / NBRC 14291 / NCTC 11154) (Bacteroides vulgatus).